A 103-amino-acid chain; its full sequence is A-type ATP synthase subunit F (103 aa).

This sequence belongs to the V-ATPase F subunit family. As to quaternary structure, has multiple subunits with at least A(3), B(3), C, D, E, F, H, I and proteolipid K(x).

It is found in the cell membrane. Its function is as follows. Component of the A-type ATP synthase that produces ATP from ADP in the presence of a proton gradient across the membrane. The protein is A-type ATP synthase subunit F of Pyrococcus abyssi (strain GE5 / Orsay).